The chain runs to 124 residues: Large ribosomal subunit protein bL12 (124 aa).

It belongs to the bacterial ribosomal protein bL12 family. Homodimer. Part of the ribosomal stalk of the 50S ribosomal subunit. Forms a multimeric L10(L12)X complex, where L10 forms an elongated spine to which 2 to 4 L12 dimers bind in a sequential fashion. Binds GTP-bound translation factors.

In terms of biological role, forms part of the ribosomal stalk which helps the ribosome interact with GTP-bound translation factors. Is thus essential for accurate translation. The protein is Large ribosomal subunit protein bL12 of Borreliella burgdorferi (strain ZS7) (Borrelia burgdorferi).